The following is a 569-amino-acid chain: Alpha-amylase (569 aa).

A signal peptide spans 1 to 28 (MARKTVAAALALVAGAAVAVTGNAPAQA). The Ca(2+) site is built by N120, Q166, and D175. D205 (nucleophile) is an active-site residue. H209 is a binding site for Ca(2+). Residue E232 is the Proton donor of the active site. Positions 468-569 (TTPPATSGAS…QLVLNDTFRS (102 aa)) constitute a CBM20 domain.

Belongs to the glycosyl hydrolase 13 family. Monomer. Ca(2+) serves as cofactor.

The catalysed reaction is Endohydrolysis of (1-&gt;4)-alpha-D-glucosidic linkages in polysaccharides containing three or more (1-&gt;4)-alpha-linked D-glucose units.. This Streptomyces violaceus (Streptomyces venezuelae) protein is Alpha-amylase (aml).